Consider the following 195-residue polypeptide: Sec-independent protein translocase protein TatB (195 aa).

Residues 2–22 form a helical membrane-spanning segment; sequence FSNVGWGEVLVLLIVALFLIG. Residues 103–125 are compositionally biased toward basic and acidic residues; sequence VKDTVDTVRKPNLRESLKADKTK. Residues 103 to 195 form a disordered region; that stretch reads VKDTVDTVRK…APGYGWEDVT (93 aa). Polar residues-rich tracts occupy residues 127 to 139 and 146 to 155; these read SAQP…SGSA and VTQQSNAGES.

This sequence belongs to the TatB family. As to quaternary structure, the Tat system comprises two distinct complexes: a TatABC complex, containing multiple copies of TatA, TatB and TatC subunits, and a separate TatA complex, containing only TatA subunits. Substrates initially bind to the TatABC complex, which probably triggers association of the separate TatA complex to form the active translocon.

The protein resides in the cell membrane. Its function is as follows. Part of the twin-arginine translocation (Tat) system that transports large folded proteins containing a characteristic twin-arginine motif in their signal peptide across membranes. Together with TatC, TatB is part of a receptor directly interacting with Tat signal peptides. TatB may form an oligomeric binding site that transiently accommodates folded Tat precursor proteins before their translocation. The sequence is that of Sec-independent protein translocase protein TatB from Corynebacterium jeikeium (strain K411).